Here is a 207-residue protein sequence, read N- to C-terminus: Small ribosomal subunit protein uS4 (207 aa).

The interval 31-56 (KCKLDSKPGQHGRTSGARTSDYGNQL) is disordered. The span at 42–53 (GRTSGARTSDYG) shows a compositional bias: polar residues. Positions 97 to 157 (ARLDNVVYRM…EKSKKQVRIV (61 aa)) constitute an S4 RNA-binding domain.

Belongs to the universal ribosomal protein uS4 family. As to quaternary structure, part of the 30S ribosomal subunit. Contacts protein S5. The interaction surface between S4 and S5 is involved in control of translational fidelity.

One of the primary rRNA binding proteins, it binds directly to 16S rRNA where it nucleates assembly of the body of the 30S subunit. Functionally, with S5 and S12 plays an important role in translational accuracy. This chain is Small ribosomal subunit protein uS4, found in Janthinobacterium sp. (strain Marseille) (Minibacterium massiliensis).